Consider the following 24-residue polypeptide: AVITGACERDVQCGGGTCCAVSLI.

C7 and C19 are joined by a disulfide.

In terms of tissue distribution, expressed by the skin glands.

The protein localises to the secreted. Functionally, stimulates insulin secretion by BRIN-BD11 cells in vitro. This chain is Prokineticin 1-like protein, found in Pelophylax saharicus (Sahara frog).